A 183-amino-acid chain; its full sequence is MDALELLINRRSASRLAEPAPTGEQLQNILRAGMRAPDHKSMQPWHFFVIEGEGRERFSAVLEQGAIAAGSDDKAIDKARNAPFRAPLIITVVAKCEENHKVPRWEQEMSAGCAVMAMQMAAVAQGFGGIWRSGALTESPVVREAFGCREQDKIVGFLYLGTPQLKASTSINVPDPTPFVTYF.

Residues 10–12 (RRS), arginine 35, and histidine 39 each bind FMN. 121–126 (AAVAQG) is an NAD(+) binding site. An FMN-binding site is contributed by 131–133 (WRS).

It belongs to the nitroreductase family. In terms of assembly, homodimer. The cofactor is FMN.

The polypeptide is Putative NAD(P)H nitroreductase YdjA (ydjA) (Escherichia coli O157:H7).